Here is a 488-residue protein sequence, read N- to C-terminus: (S)-N-methylcoclaurine 3'-hydroxylase isozyme 2 (488 aa).

A helical transmembrane segment spans residues 3–23 (VVTVALIAVIISSILYLLFGS). Cysteine 430 is a heme binding site.

Belongs to the cytochrome P450 family. The cofactor is heme.

It is found in the endoplasmic reticulum membrane. It localises to the microsome membrane. The enzyme catalyses (S)-N-methylcoclaurine + reduced [NADPH--hemoprotein reductase] + O2 = (S)-3'-hydroxy-N-methylcoclaurine + oxidized [NADPH--hemoprotein reductase] + H2O + H(+). It functions in the pathway alkaloid biosynthesis; (S)-reticuline biosynthesis; (S)-reticuline from (S)-norcoclaurine: step 3/4. In terms of biological role, 3'-hydroxylation of (S)-N-methylcoclaurine. In Eschscholzia californica (California poppy), this protein is (S)-N-methylcoclaurine 3'-hydroxylase isozyme 2 (CYP80B2).